The sequence spans 182 residues: uncharacterized protein (182 aa).

It belongs to the mimivirus L6/L7/L57 family.

This is an uncharacterized protein from Acanthamoeba polyphaga mimivirus (APMV).